The following is a 444-amino-acid chain: Structure-specific endonuclease subunit SLX1 (444 aa).

Residues 23–105 (AFYCCYLLRS…QNTKVSRHAD (83 aa)) form the GIY-YIG domain. The SLX1-type zinc-finger motif lies at 240-295 (CGVCKQRLILQHDIIAVCSHSSCHCAAHLSCLSSHFLKDKDSDSELIPREGTCPAC). Disordered regions lie at residues 323 to 355 (RRRRQAGTPKGQGLKSVRGRGRGHSEDESDALQ) and 386 to 444 (AHRP…EVIE).

This sequence belongs to the SLX1 family. As to quaternary structure, forms a heterodimer with SLX4. The cofactor is a divalent metal cation.

It is found in the nucleus. Its function is as follows. Catalytic subunit of the SLX1-SLX4 structure-specific endonuclease that resolves DNA secondary structures generated during DNA repair and recombination. Has endonuclease activity towards branched DNA substrates, introducing single-strand cuts in duplex DNA close to junctions with ss-DNA. In Paracoccidioides brasiliensis (strain Pb18), this protein is Structure-specific endonuclease subunit SLX1.